Here is a 440-residue protein sequence, read N- to C-terminus: Polycomb group protein VERNALIZATION 2 (440 aa).

The C2H2-type zinc-finger motif lies at 86 to 111 (EDCSCPFCSMLCGSFKGLQFHLNSSH). A Nuclear localization signal motif is present at residues 156 to 163 (KPRKRRQR). Positions 267–345 (RQFYHSHRVQ…GHISWACEVF (79 aa)) are VEFS-box. A disordered region spans residues 398–440 (NNNNNSVDHPSDSNTNNNNIVDHPNDIKNKNNVDNKDNNSRDK). The span at 420–440 (HPNDIKNKNNVDNKDNNSRDK) shows a compositional bias: basic and acidic residues.

Belongs to the VEFS (VRN2-EMF2-FIS2-SU(Z)12) family. As to quaternary structure, probable component of a PcG complex. In plants, PcG complexes are probably composed of a member of the EZ family (CLF or MEA), FIE, and a member of the VEFS family (FIS2, VRN2 or EMF2). Component of the plant homeodomain / polycomb repressive complex 2 (PHD-PRC2) large complex during prolonged cold, composed of core PRC2 components (VRN2, EZA1, FIE and MSI1), and three related PHD finger proteins (VIL1, VIL2 and VIN3) that mediates histone H3 trimethylation on 'Lys-27' (H3K27me3). Binds to ALP1. In terms of tissue distribution, weakly expressed. Expressed both during, and in the absence of vernalization.

The protein resides in the nucleus. In terms of biological role, polycomb group (PcG) protein. Plays a central role in vernalization by maintaining repressed the homeotic gene FLC, a floral repressor, after a cold treatment. PcG proteins act by forming multiprotein complexes, which are required to maintain the transcriptionally repressive state of homeotic genes throughout development. PcG proteins are not required to initiate repression, but to maintain it during later stages of development. They probably act via the methylation of histones, rendering chromatin heritably changed in its expressibility. Associates constitutively along the whole FLC locus. In Arabidopsis thaliana (Mouse-ear cress), this protein is Polycomb group protein VERNALIZATION 2 (VRN2).